We begin with the raw amino-acid sequence, 427 residues long: MTDSNTLFSRAQQVIPGGVNSPVRAFKGVGGTPVFIQKAKGAYIWDTDDKQYVDYVGSWGPMILGHNHPAILSAVIKTAENGLSFGAPTPIEIDLAELVCKLIPSMEMVRMVSSGTEATMSAIRLARGYTNRDKIIKFEGCYHGHADSLLVKAGSGALTLGQPNSPGVPADFAKHTLTCTYNDLESVKQAFEQYPQDIACIIVEPVAGNMNCVPPQNNFLQGLRELCNQYGAVFIIDEVMTGFRVALGGAQSYYNVEPDLTCLGKVIGGGMPVGAFGGKKEIMQFIAPTGPVYQAGTLSGNPIAMAAGLACLTELQKAGNQERLAQLTEKLALGLKALADKHHVPFTVNYVGGMFGLFFTDKAQVTCYQDVMACDTEKFKVFFHKMLDEGVYLAPSAFEAGFMSLAHTDADIDRTLTAADKAFAALA.

The residue at position 265 (Lys265) is an N6-(pyridoxal phosphate)lysine.

This sequence belongs to the class-III pyridoxal-phosphate-dependent aminotransferase family. HemL subfamily. Homodimer. Requires pyridoxal 5'-phosphate as cofactor.

The protein localises to the cytoplasm. The catalysed reaction is (S)-4-amino-5-oxopentanoate = 5-aminolevulinate. The protein operates within porphyrin-containing compound metabolism; protoporphyrin-IX biosynthesis; 5-aminolevulinate from L-glutamyl-tRNA(Glu): step 2/2. This is Glutamate-1-semialdehyde 2,1-aminomutase from Mannheimia succiniciproducens (strain KCTC 0769BP / MBEL55E).